A 310-amino-acid chain; its full sequence is Small ribosomal subunit biogenesis GTPase RsgA 2 (310 aa).

The CP-type G domain occupies 77 to 238 (LSKQSHILAA…IIDTPGIKGF (162 aa)). GTP-binding positions include 126 to 129 (NKVD) and 180 to 188 (GHSGVGKST). Positions 262, 267, 269, and 275 each coordinate Zn(2+).

Belongs to the TRAFAC class YlqF/YawG GTPase family. RsgA subfamily. Monomer. Associates with 30S ribosomal subunit, binds 16S rRNA. Requires Zn(2+) as cofactor.

It localises to the cytoplasm. Its function is as follows. One of several proteins that assist in the late maturation steps of the functional core of the 30S ribosomal subunit. Helps release RbfA from mature subunits. May play a role in the assembly of ribosomal proteins into the subunit. Circularly permuted GTPase that catalyzes slow GTP hydrolysis, GTPase activity is stimulated by the 30S ribosomal subunit. The polypeptide is Small ribosomal subunit biogenesis GTPase RsgA 2 (Bacteroides thetaiotaomicron (strain ATCC 29148 / DSM 2079 / JCM 5827 / CCUG 10774 / NCTC 10582 / VPI-5482 / E50)).